The primary structure comprises 70 residues: MRAIISLILISAMVFSMIAAVPEEEGLQLSEDERGGCLPHNRFCNALSGPRCCSGLRCKELSIWDSRCLG.

Residues 1 to 20 (MRAIISLILISAMVFSMIAA) form the signal peptide. Residues 21–34 (VPEEEGLQLSEDER) constitute a propeptide that is removed on maturation. 3 disulfide bridges follow: C37–C53, C44–C58, and C52–C68. L69 is subject to Leucine amide.

This sequence belongs to the neurotoxin 01 (U2-agtx) family. As to expression, expressed by the venom gland.

It is found in the secreted. Insect active toxin causing rapid but reversible paralysis in crickets. No activity shown in mammals. Does not show effect on mammalian voltage-gated calcium channels. The sequence is that of U2-agatoxin-Ao1b from Agelena orientalis (Funnel-web spider).